Here is a 569-residue protein sequence, read N- to C-terminus: CTP synthase (569 aa).

Positions 313-569 (RIAMVGKYTG…NASLERLKKM (257 aa)) constitute a Glutamine amidotransferase type-1 domain. Cys-410 functions as the Nucleophile in the catalytic mechanism. Residues His-541 and Glu-543 contribute to the active site.

It belongs to the CTP synthase family.

It carries out the reaction UTP + L-glutamine + ATP + H2O = CTP + L-glutamate + ADP + phosphate + 2 H(+). It participates in pyrimidine metabolism; CTP biosynthesis via de novo pathway; CTP from UDP: step 2/2. Its function is as follows. Catalyzes the ATP-dependent amination of UTP to CTP with either L-glutamine or ammonia as the source of nitrogen. The sequence is that of CTP synthase (ctps) from Dictyostelium discoideum (Social amoeba).